Reading from the N-terminus, the 415-residue chain is Multidrug resistance protein MdtA (415 aa).

An N-terminal signal peptide occupies residues 1 to 21 (MKSTVKKRGWVIAGIVVVALA). A disordered region spans residues 387–415 (AQTAADAAKPERGERAPTDSARAAKGARS). A compositionally biased stretch (basic and acidic residues) spans 394–403 (AKPERGERAP).

It belongs to the membrane fusion protein (MFP) (TC 8.A.1) family. As to quaternary structure, part of a tripartite efflux system composed of MdtA, MdtB and MdtC.

It localises to the cell inner membrane. This chain is Multidrug resistance protein MdtA, found in Cronobacter turicensis (strain DSM 18703 / CCUG 55852 / LMG 23827 / z3032).